The following is a 342-amino-acid chain: Isopentenyl-diphosphate delta-isomerase (342 aa).

Residue 6-7 (RK) participates in substrate binding. Residues Ser-63, 64 to 66 (SMT), Ser-94, and Asn-122 contribute to the FMN site. 94–96 (SMR) is a substrate binding site. Gln-157 is a substrate binding site. Glu-158 provides a ligand contact to Mg(2+). Residues Lys-189, Thr-219, 269 to 271 (GLK), and 290 to 291 (AG) each bind FMN.

The protein belongs to the IPP isomerase type 2 family. As to quaternary structure, homooctamer. Dimer of tetramers. It depends on FMN as a cofactor. NADPH serves as cofactor. Mg(2+) is required as a cofactor.

The protein resides in the cytoplasm. The enzyme catalyses isopentenyl diphosphate = dimethylallyl diphosphate. Functionally, involved in the biosynthesis of isoprenoids. Catalyzes the 1,3-allylic rearrangement of the homoallylic substrate isopentenyl (IPP) to its allylic isomer, dimethylallyl diphosphate (DMAPP). This chain is Isopentenyl-diphosphate delta-isomerase, found in Rickettsia bellii (strain RML369-C).